The sequence spans 218 residues: MTASPSSAEGSSGLPDRPKLVLASASPRRLSLLEQIGIVPDAVVSADIDEEPRPGELPRPLAQRLARQKAEHVAAQRTDAALVLGADTVVSVGRRVLPKAEDEKTARACLKLLSGRRHKVLTAVVLRPSAGWPQGTPCERLVETSVIFHRLTDAQIDALIAQGDWQGKAGGYAIQGAAAAHIRQIGGSYSAVVGLPLFETAQLLRGQPVGKPSGGWIA.

Polar residues predominate over residues 1–10; sequence MTASPSSAEG. A disordered region spans residues 1–20; the sequence is MTASPSSAEGSSGLPDRPKL. The Proton acceptor role is filled by Asp87.

It belongs to the Maf family. YhdE subfamily. Requires a divalent metal cation as cofactor.

The protein resides in the cytoplasm. The enzyme catalyses dTTP + H2O = dTMP + diphosphate + H(+). It carries out the reaction UTP + H2O = UMP + diphosphate + H(+). Its function is as follows. Nucleoside triphosphate pyrophosphatase that hydrolyzes dTTP and UTP. May have a dual role in cell division arrest and in preventing the incorporation of modified nucleotides into cellular nucleic acids. This Gluconobacter oxydans (strain 621H) (Gluconobacter suboxydans) protein is dTTP/UTP pyrophosphatase.